Consider the following 700-residue polypeptide: DNA ligase (700 aa).

Residues 61 to 65 (DAEYD), 110 to 111 (SL), and Glu141 each bind NAD(+). Lys143 serves as the catalytic N6-AMP-lysine intermediate. The NAD(+) site is built by Arg164, Glu202, Lys321, and Lys345. The Zn(2+) site is built by Cys439, Cys442, Cys457, and Cys462. The BRCT domain occupies 619-700 (AVSNKLAGLQ…EFLRLLEDSK (82 aa)).

Belongs to the NAD-dependent DNA ligase family. LigA subfamily. The cofactor is Mg(2+). It depends on Mn(2+) as a cofactor.

The catalysed reaction is NAD(+) + (deoxyribonucleotide)n-3'-hydroxyl + 5'-phospho-(deoxyribonucleotide)m = (deoxyribonucleotide)n+m + AMP + beta-nicotinamide D-nucleotide.. In terms of biological role, DNA ligase that catalyzes the formation of phosphodiester linkages between 5'-phosphoryl and 3'-hydroxyl groups in double-stranded DNA using NAD as a coenzyme and as the energy source for the reaction. It is essential for DNA replication and repair of damaged DNA. The sequence is that of DNA ligase from Hydrogenobaculum sp. (strain Y04AAS1).